We begin with the raw amino-acid sequence, 724 residues long: Probable ATP-dependent RNA helicase DDX4 (724 aa).

The interval 1–246 is disordered; the sequence is MGDEDWEAEI…SDTQGPKVTY (246 aa). Over residues 30-42 the composition is skewed to polar residues; sequence NGDNFNRTPASSS. Residues 69 to 78 are compositionally biased toward basic and acidic residues; it reads DAGECNKRDN. The segment covering 150 to 162 has biased composition (gly residues); it reads RGSFRGCRGGFGL. Residues 195-205 are compositionally biased toward low complexity; sequence GDTSQSRSGSG. Phosphoserine occurs at positions 222 and 226. An interaction with RANBP9 region spans residues 228–247; the sequence is KSEAEGGESSDTQGPKVTYI. A Q motif motif is present at residues 288-316; the sequence is LTFEEANLCQTLNNNIAKAGYTKLTPVQK. One can recognise a Helicase ATP-binding domain in the interval 319–502; sequence IPIILAGRDL…AEFLKSNYLF (184 aa). An ATP-binding site is contributed by 332 to 339; sequence AQTGSGKT. A DEAD box motif is present at residues 446 to 449; it reads DEAD. The 146-residue stretch at 530 to 675 folds into the Helicase C-terminal domain; it reads KLVEILRNIG…DVPAWLEEIA (146 aa). The segment covering 704-715 has biased composition (polar residues); it reads LNTAGFSSSQAP. Positions 704–724 are disordered; sequence LNTAGFSSSQAPNPVDDESWD. Serine 722 carries the phosphoserine modification.

Belongs to the DEAD box helicase family. DDX4/VASA subfamily. As to quaternary structure, found in a mRNP complex, at least composed of TDRD1, TDRD6, TDRD7 and DDX4. Interacts with RANBP9. Interacts with RANBP10. Interacts with PIWIL2 and MAEL. Interacts with BMAL1 and CLOCK. Interacts with Tex19.1 and, probably, Tex19.2. Interacts with RBM46. Expressed only in ovary and testis. Expressed in migratory primordial germ cells in the region of the gonadal ridge in both sexes.

The protein localises to the cytoplasm. The protein resides in the perinuclear region. The enzyme catalyses ATP + H2O = ADP + phosphate + H(+). Functionally, ATP-dependent RNA helicase required during spermatogenesis. Required to repress transposable elements and preventing their mobilization, which is essential for the germline integrity. Acts via the piRNA metabolic process, which mediates the repression of transposable elements during meiosis by forming complexes composed of piRNAs and Piwi proteins and governs the methylation and subsequent repression of transposons. Involved in the secondary piRNAs metabolic process, the production of piRNAs in fetal male germ cells through a ping-pong amplification cycle. Required for PIWIL2 slicing-triggered piRNA biogenesis: helicase activity enables utilization of one of the slice cleavage fragments generated by PIWIL2 and processing these pre-piRNAs into piRNAs. The chain is Probable ATP-dependent RNA helicase DDX4 (DDX4) from Homo sapiens (Human).